The primary structure comprises 530 residues: Phosphoenolpyruvate carboxykinase (ATP) (530 aa).

Residues Arg-58, Tyr-195, and Lys-201 each contribute to the substrate site. ATP is bound by residues Lys-201, His-220, and 236–244; that span reads GLSGTGKTT. Lys-201 and His-220 together coordinate Mn(2+). Asp-257 contacts Mn(2+). Residues Glu-285, Arg-321, 440–441, and Thr-446 contribute to the ATP site; that span reads RI. Arg-321 provides a ligand contact to substrate.

It belongs to the phosphoenolpyruvate carboxykinase (ATP) family. Mn(2+) serves as cofactor.

The protein localises to the cytoplasm. The enzyme catalyses oxaloacetate + ATP = phosphoenolpyruvate + ADP + CO2. It participates in carbohydrate biosynthesis; gluconeogenesis. Its function is as follows. Involved in the gluconeogenesis. Catalyzes the conversion of oxaloacetate (OAA) to phosphoenolpyruvate (PEP) through direct phosphoryl transfer between the nucleoside triphosphate and OAA. The chain is Phosphoenolpyruvate carboxykinase (ATP) from Staphylococcus epidermidis (strain ATCC 35984 / DSM 28319 / BCRC 17069 / CCUG 31568 / BM 3577 / RP62A).